Reading from the N-terminus, the 316-residue chain is Uracil-DNA glycosylase (316 aa).

Positions 36-79 (AAAAAPAGAGAGASKPARPSAAARPAKGTPAASAATTATGADAS) are enriched in low complexity. A disordered region spans residues 36–91 (AAAAAPAGAGAGASKPARPSAAARPAKGTPAASAATTATGADASAPPPDPGAPTWD). D159 (proton acceptor) is an active-site residue.

This sequence belongs to the uracil-DNA glycosylase (UDG) superfamily. UNG family.

Its subcellular location is the host nucleus. The catalysed reaction is Hydrolyzes single-stranded DNA or mismatched double-stranded DNA and polynucleotides, releasing free uracil.. Its function is as follows. Excises uracil residues from the DNA which can arise as a result of misincorporation of dUMP residues by DNA polymerase or deamination of cytosines. Therefore may reduce deleterious uracil incorporation into the viral genome, particularly in terminally differentiated cells which lack DNA repair enzymes. This chain is Uracil-DNA glycosylase (UL2), found in Sus scrofa (Pig).